Consider the following 261-residue polypeptide: Acyl-[acyl-carrier-protein]--UDP-N-acetylglucosamine O-acyltransferase (261 aa).

It belongs to the transferase hexapeptide repeat family. LpxA subfamily. Homotrimer.

The protein localises to the cytoplasm. The enzyme catalyses a (3R)-hydroxyacyl-[ACP] + UDP-N-acetyl-alpha-D-glucosamine = a UDP-3-O-[(3R)-3-hydroxyacyl]-N-acetyl-alpha-D-glucosamine + holo-[ACP]. The protein operates within glycolipid biosynthesis; lipid IV(A) biosynthesis; lipid IV(A) from (3R)-3-hydroxytetradecanoyl-[acyl-carrier-protein] and UDP-N-acetyl-alpha-D-glucosamine: step 1/6. Its function is as follows. Involved in the biosynthesis of lipid A, a phosphorylated glycolipid that anchors the lipopolysaccharide to the outer membrane of the cell. The chain is Acyl-[acyl-carrier-protein]--UDP-N-acetylglucosamine O-acyltransferase from Sulfurimonas denitrificans (strain ATCC 33889 / DSM 1251) (Thiomicrospira denitrificans (strain ATCC 33889 / DSM 1251)).